The sequence spans 229 residues: Ribonuclease 3 (229 aa).

In terms of domain architecture, RNase III spans 5 to 127; that stretch reads LDRLERKLGY…LIGAIYLDTG (123 aa). Residue E40 participates in Mg(2+) binding. D44 is an active-site residue. Positions 113 and 116 each coordinate Mg(2+). Residue E116 is part of the active site. One can recognise a DRBM domain in the interval 154–224; sequence DPKTRLQEFL…AAAALVALGV (71 aa).

The protein belongs to the ribonuclease III family. As to quaternary structure, homodimer. Mg(2+) is required as a cofactor.

The protein resides in the cytoplasm. The enzyme catalyses Endonucleolytic cleavage to 5'-phosphomonoester.. Digests double-stranded RNA. Involved in the processing of primary rRNA transcript to yield the immediate precursors to the large and small rRNAs (23S and 16S). Processes some mRNAs, and tRNAs when they are encoded in the rRNA operon. Processes pre-crRNA and tracrRNA of type II CRISPR loci if present in the organism. In Pseudomonas aeruginosa (strain LESB58), this protein is Ribonuclease 3.